A 166-amino-acid polypeptide reads, in one-letter code: Outer membrane protein assembly factor BamE (166 aa).

An N-terminal signal peptide occupies residues 1 to 18 (MKRTVFPLAVAAALTLTA). Cysteine 19 carries the N-palmitoyl cysteine lipid modification. The S-diacylglycerol cysteine moiety is linked to residue cysteine 19. Residues 143–166 (LFSNDDSGEMPVKPESKPSDLLNE) are disordered.

Belongs to the BamE family. As to quaternary structure, part of the Bam complex.

It localises to the cell outer membrane. In terms of biological role, part of the outer membrane protein assembly complex, which is involved in assembly and insertion of beta-barrel proteins into the outer membrane. This chain is Outer membrane protein assembly factor BamE, found in Methylomonas methanica (strain DSM 25384 / MC09).